We begin with the raw amino-acid sequence, 210 residues long: Casparian strip membrane protein 1 (210 aa).

The disordered stretch occupies residues 1–25 (MEKSEATTIDVAETSRESKGKAPLL). Residues 1-48 (MEKSEATTIDVAETSRESKGKAPLLRDPPAWVPAAVERQRAAPAYKRG) are Cytoplasmic-facing. A helical transmembrane segment spans residues 49 to 69 (VAIFDLILRISAATAALAATI). Over 70–98 (TMGTTEQTLPFFTQFFQFQASYDDLPTFT) the chain is Extracellular. The helical transmembrane segment at 99–119 (FFVIAMSIVTGYLVLSVPFSI) threads the bilayer. Over 120-138 (VCIARPVAAAPRLLLILCD) the chain is Cytoplasmic. A helical transmembrane segment spans residues 139 to 159 (TLAVTLNTSAAGASAAIVYLA). Over 160–183 (HNGNSDANWLAICQQFNDFCQRTS) the chain is Extracellular. The chain crosses the membrane as a helical span at residues 184–204 (GAVVASFVAVVLLIFLVVLSA). Residues 205–210 (SALKKH) are Cytoplasmic-facing.

This sequence belongs to the Casparian strip membrane proteins (CASP) family. As to quaternary structure, homodimer and heterodimers.

The protein resides in the cell membrane. Regulates membrane-cell wall junctions and localized cell wall deposition. Required for establishment of the Casparian strip membrane domain (CSD) and the subsequent formation of Casparian strips, a cell wall modification of the root endodermis that determines an apoplastic barrier between the intraorganismal apoplasm and the extraorganismal apoplasm and prevents lateral diffusion. The chain is Casparian strip membrane protein 1 from Erythranthe guttata (Yellow monkey flower).